Reading from the N-terminus, the 259-residue chain is Haloacid dehalogenase-like hydrolase domain-containing protein 2 (259 aa).

2 residues coordinate Mg(2+): D13 and S15. Substrate contacts are provided by residues 13–15 (DLS) and 46–47 (TN). Residues 49 to 71 (TKESKRDLLERLRKLEFDISEEE) adopt a coiled-coil conformation. The residue at position 50 (K50) is an N6-succinyllysine. A substrate-binding site is contributed by K179. D204 lines the Mg(2+) pocket.

It belongs to the HAD-like hydrolase superfamily. Requires Mg(2+) as cofactor.

In Rattus norvegicus (Rat), this protein is Haloacid dehalogenase-like hydrolase domain-containing protein 2 (Hdhd2).